A 191-amino-acid chain; its full sequence is Protein UL140 (191 aa).

A helical transmembrane segment spans residues Thr28–Trp48.

The protein resides in the host membrane. The chain is Protein UL140 (UL140) from Homo sapiens (Human).